The primary structure comprises 372 residues: 3-galactosyl-N-acetylglucosaminide 4-alpha-L-fucosyltransferase FUT3 (372 aa).

Over 1-15 (MDPLGAAKPQWPWRR) the chain is Cytoplasmic. The helical; Signal-anchor for type II membrane protein transmembrane segment at 16–34 (CLAALLFQLLVAVCFFSYL) threads the bilayer. The Lumenal portion of the chain corresponds to 35–372 (RVSRDDATGS…TMRSIAAWFT (338 aa)). The disordered stretch occupies residues 40 to 69 (DATGSPRPGLMAVEPVTGAPSGSSRQDTTP). N-linked (GlcNAc...) asparagine glycans are attached at residues asparagine 165 and asparagine 196.

This sequence belongs to the glycosyltransferase 10 family. In terms of processing, glycosylated.

The protein localises to the golgi apparatus. The protein resides in the golgi stack membrane. It catalyses the reaction a beta-D-galactosyl-(1-&gt;3)-N-acetyl-beta-D-glucosaminyl derivative + GDP-beta-L-fucose = a beta-D-galactosyl-(1-&gt;3)-[alpha-L-fucosyl-(1-&gt;4)]-N-acetyl-beta-D-glucosaminyl derivative + GDP + H(+). It carries out the reaction an N-acetyl-alpha-neuraminyl-(2-&gt;3)-beta-D-galactosyl-(1-&gt;4)-N-acetyl-beta-D-glucosaminyl derivative + GDP-beta-L-fucose = an alpha-Neu5Ac-(2-&gt;3)-beta-D-Gal-(1-&gt;4)-[alpha-L-Fuc-(1-&gt;3)]-beta-D-GlcNAc derivative + GDP + H(+). The enzyme catalyses a beta-D-galactosyl-(1-&gt;4)-N-acetyl-beta-D-glucosaminyl derivative + GDP-beta-L-fucose = a beta-D-galactosyl-(1-&gt;4)-[alpha-L-fucosyl-(1-&gt;3)]-N-acetyl-beta-D-glucosaminyl derivative + GDP + H(+). The catalysed reaction is an alpha-Neu5Ac-(2-&gt;3)-beta-D-Gal-(1-&gt;4)-beta-D-GlcNAc-(1-&gt;3)-beta-D-Gal-(1-&gt;4)-[alpha-L-Fuc-(1-&gt;3)]-beta-D-GlcNAc derivative + GDP-beta-L-fucose = an alpha-Neu5Ac-(2-&gt;3)-beta-D-Gal-(1-&gt;4)-[alpha-L-Fuc-(1-&gt;3)]-beta-D-GlcNAc-(1-&gt;3)-beta-D-Gal-(1-&gt;4)-[alpha-L-Fuc-(1-&gt;3)]-beta-D-GlcNAc derivative + GDP + H(+). It catalyses the reaction Lc4Cer + GDP-beta-L-fucose = a lactoside III(4)-a-Fuc-Lc4Cer + GDP + H(+). It carries out the reaction a beta-D-Gal-(1-&gt;3)-beta-D-GlcNAc-(1-&gt;3)-beta-D-Gal-(1-&gt;4)-beta-D-Glc-(1&lt;-&gt;1')-Cer(d18:1(4E)) + GDP-beta-L-fucose = a III(4)-a-Fuc-Lc4Cer(d18:1(4E)) + GDP + H(+). The enzyme catalyses N-acetyl-alpha-neuraminosyl-(2-&gt;3)-beta-D-galactosyl-(1-&gt;3)-[N-acetyl-alpha-neuraminosyl-(2-&gt;6)]-N-acetyl-beta-D-glucosaminyl-(1-&gt;3)-beta-D-galactosyl-(1-&gt;4)-beta-D-glucosyl-(1&lt;-&gt;1')-N-acyl-sphing-4-enine + GDP-beta-L-fucose = N-acetyl-alpha-neuraminosyl-(2-&gt;3)-beta-D-galactosyl-(1-&gt;3)-alpha-L-fucosyl-(1-&gt;4)-[N-acetyl-alpha-neuraminosyl-(2-&gt;6)-N-acetyl-beta-D-glucosaminyl-(1-&gt;3)]-beta-D-galactosyl-(1-&gt;4)-beta-D-glucosyl-(1&lt;-&gt;1')-N-acyl-sphing-4-enine + GDP + H(+). The catalysed reaction is N-acetyl-alpha-neuraminosyl-(2-&gt;3)-beta-D-galactosyl-(1-&gt;3)-N-acetyl-beta-D-glucosaminyl-(1-&gt;3)-beta-D-galactosyl-(1-&gt;4)-beta-D-glucosyl-(1&lt;-&gt;1')-N-acyl-sphing-4-enine + GDP-beta-L-fucose = N-acetyl-alpha-neuraminosyl-(2-&gt;3)-beta-D-galactosyl-(1-&gt;3)-alpha-L-fucosyl-(1-&gt;4)-[N-acetyl-beta-D-glucosaminyl-(1-&gt;3)]-beta-D-galactosyl-(1-&gt;4)-beta-D-glucosyl-(1&lt;-&gt;1')-N-acyl-sphing-4-enine + GDP + H(+). It catalyses the reaction beta-D-galactosyl-(1-&gt;3)-N-acetyl-D-glucosamine + GDP-beta-L-fucose = beta-D-galactosyl-(1-&gt;3)-[alpha-L-fucosyl-(1-&gt;4)]-N-acetyl-D-glucosamine + GDP + H(+). It carries out the reaction alpha-L-Fuc-(1-&gt;2)-beta-D-Gal-(1-&gt;3)-D-GlcNAc + GDP-beta-L-fucose = alpha-L-Fuc-(1-&gt;2)-beta-D-Gal-(1-&gt;3)-[alpha-L-Fuc-(1-&gt;4)]-D-GlcNAc + GDP + H(+). The enzyme catalyses alpha-L-Fuc-(1-&gt;2)-beta-D-Gal-(1-&gt;4)-D-GlcNAc + GDP-beta-L-fucose = alpha-L-Fuc-(1-&gt;2)-beta-D-Gal-(1-&gt;4)-[alpha-L-Fuc-(1-&gt;3)]-D-GlcNAc + GDP + H(+). The catalysed reaction is beta-D-galactosyl-(1-&gt;4)-N-acetyl-D-glucosamine + GDP-beta-L-fucose = beta-D-galactosyl-(1-&gt;4)-[alpha-L-fucosyl-(1-&gt;3)]-N-acetyl-D-glucosamine + GDP + H(+). It catalyses the reaction lactose + GDP-beta-L-fucose = beta-D-galactosyl-(1-&gt;4)-[alpha-L-fucosyl-(1-&gt;3)]-D-glucose + GDP + H(+). It carries out the reaction an alpha-Neu5Ac-(2-&gt;3)-beta-D-Gal-(1-&gt;3)-D-GlcNAc derivative + GDP-beta-L-fucose = an alpha-Neu5Ac-(2-&gt;3)-beta-D-Gal-(1-&gt;3)-[alpha-L-Fuc-(1-&gt;4)]-beta-D-GlcNAc derivative + GDP + H(+). The protein operates within protein modification; protein glycosylation. Catalyzes the transfer of L-fucose, from a guanosine diphosphate-beta-L-fucose, to both the subterminal N-acetyl glucosamine (GlcNAc) of type 1 chain (beta-D-Gal-(1-&gt;3)-beta-D-GlcNAc) glycolipids and oligosaccharides via an alpha(1,4) linkage, and the subterminal glucose (Glc) or GlcNAc of type 2 chain (beta-D-Gal-(1-&gt;4)-beta-D-GlcNAc) oligosaccharides via an alpha(1,3) linkage, independently of the presence of terminal alpha-L-fucosyl-(1,2) moieties on the terminal galactose of these acceptors and participates in the blood groups Lewis determination and expression of Lewis a (Le(a)), lewis b (Le(b)), Lewis x/SSEA-1 (Le(x)) and lewis y (Le(y)) antigens. Also catalyzes the transfer of L-fucose to subterminal GlcNAc of sialyl- and disialyl-lactotetraosylceramide to produce sialyl Lewis a (sLe(a)) and disialyl Lewis a via an alpha(1,4) linkage and therefore may regulate cell surface sialyl Lewis a expression and consequently regulates adhesive properties to E-selectin, cell proliferation and migration. Catalyzes the transfer of an L-fucose to 3'-sialyl-N-acetyllactosamine by an alpha(1,3) linkage, which allows the formation of sialyl-Lewis x structure and therefore may regulate the sialyl-Lewis x surface antigen expression and consequently adhesive properties to E-selectin. Prefers type 1 chain over type 2 acceptors. Type 1 tetrasaccharide is a better acceptor than type 1 disaccharide suggesting that a beta anomeric configuration of GlcNAc in the substrate is preferred. Lewis-positive (Le(+)) individuals have an active enzyme while Lewis-negative (Le(-)) individuals have an inactive enzyme. The protein is 3-galactosyl-N-acetylglucosaminide 4-alpha-L-fucosyltransferase FUT3 of Pan troglodytes (Chimpanzee).